The sequence spans 438 residues: Adenosylhomocysteinase (438 aa).

T61, D137, and E162 together coordinate substrate. An NAD(+)-binding site is contributed by 163–165 (TTT). K192 and D196 together coordinate substrate. NAD(+)-binding positions include N197, 226–231 (GYGDVG), E249, N284, 305–307 (IGH), and N352.

This sequence belongs to the adenosylhomocysteinase family. NAD(+) is required as a cofactor.

The protein resides in the cytoplasm. It catalyses the reaction S-adenosyl-L-homocysteine + H2O = L-homocysteine + adenosine. It functions in the pathway amino-acid biosynthesis; L-homocysteine biosynthesis; L-homocysteine from S-adenosyl-L-homocysteine: step 1/1. Functionally, may play a key role in the regulation of the intracellular concentration of adenosylhomocysteine. In Christiangramia forsetii (strain DSM 17595 / CGMCC 1.15422 / KT0803) (Gramella forsetii), this protein is Adenosylhomocysteinase.